Reading from the N-terminus, the 484-residue chain is Glycogen synthase (484 aa).

K15 contributes to the ADP-alpha-D-glucose binding site.

This sequence belongs to the glycosyltransferase 1 family. Bacterial/plant glycogen synthase subfamily.

It carries out the reaction [(1-&gt;4)-alpha-D-glucosyl](n) + ADP-alpha-D-glucose = [(1-&gt;4)-alpha-D-glucosyl](n+1) + ADP + H(+). It participates in glycan biosynthesis; glycogen biosynthesis. Its function is as follows. Synthesizes alpha-1,4-glucan chains using ADP-glucose. This is Glycogen synthase from Geotalea uraniireducens (strain Rf4) (Geobacter uraniireducens).